A 152-amino-acid chain; its full sequence is NADH-quinone oxidoreductase subunit A 2 (152 aa).

Transmembrane regions (helical) follow at residues 8 to 28 (FGKV…GYVS), 63 to 83 (FYVV…LFPW), and 90 to 110 (LGGF…LGLV).

This sequence belongs to the complex I subunit 3 family. In terms of assembly, NDH-1 is composed of 14 different subunits. Subunits NuoA, H, J, K, L, M, N constitute the membrane sector of the complex.

The protein resides in the cell inner membrane. The catalysed reaction is a quinone + NADH + 5 H(+)(in) = a quinol + NAD(+) + 4 H(+)(out). In terms of biological role, NDH-1 shuttles electrons from NADH, via FMN and iron-sulfur (Fe-S) centers, to quinones in the respiratory chain. The immediate electron acceptor for the enzyme in this species is believed to be a menaquinone. Couples the redox reaction to proton translocation (for every two electrons transferred, four hydrogen ions are translocated across the cytoplasmic membrane), and thus conserves the redox energy in a proton gradient. In Chloroherpeton thalassium (strain ATCC 35110 / GB-78), this protein is NADH-quinone oxidoreductase subunit A 2.